The chain runs to 226 residues: Cytidylate kinase (226 aa).

ATP is bound at residue Gly9–Thr17.

Belongs to the cytidylate kinase family. Type 1 subfamily.

It is found in the cytoplasm. The catalysed reaction is CMP + ATP = CDP + ADP. It catalyses the reaction dCMP + ATP = dCDP + ADP. The chain is Cytidylate kinase from Clostridium tetani (strain Massachusetts / E88).